Here is a 158-residue protein sequence, read N- to C-terminus: MEQGVVEELIHLQLPEVEAVDVVNVPDGNGDGDGDGDGDGNDAWERQLDEVQMQAMRLENPQVAMLLDAPHEPPIELHHMLEPVNVPQRPRKKRSFLTISKPFHVQPERCALISNGWRAVQCVQPEKRGEYFANYLIKHMNSRNYPNGEGLPNRWGQF.

The disordered stretch occupies residues 24–43 (NVPDGNGDGDGDGDGDGNDA). The span at 30–42 (GDGDGDGDGDGND) shows a compositional bias: acidic residues.

Belongs to the male-specific scotti family.

In terms of biological role, post-meiotically transcribed gene that has a role in late spermiogenesis; required for actin cone progression during spermatid individualization. This Drosophila virilis (Fruit fly) protein is Male-specific protein scotti.